The chain runs to 317 residues: Transaldolase (317 aa).

The active-site Schiff-base intermediate with substrate is the K132.

It belongs to the transaldolase family. Type 1 subfamily. As to quaternary structure, homodimer.

The protein resides in the cytoplasm. It catalyses the reaction D-sedoheptulose 7-phosphate + D-glyceraldehyde 3-phosphate = D-erythrose 4-phosphate + beta-D-fructose 6-phosphate. The protein operates within carbohydrate degradation; pentose phosphate pathway; D-glyceraldehyde 3-phosphate and beta-D-fructose 6-phosphate from D-ribose 5-phosphate and D-xylulose 5-phosphate (non-oxidative stage): step 2/3. Its function is as follows. Transaldolase is important for the balance of metabolites in the pentose-phosphate pathway. The polypeptide is Transaldolase (talB) (Escherichia coli O104:H4 (strain 2009EL-2071)).